We begin with the raw amino-acid sequence, 310 residues long: Protoheme IX farnesyltransferase 2 (310 aa).

Helical transmembrane passes span 25-45 (PGIIFGNLISVAGGFLLAAKG), 49-69 (LVLMLASLVGLSLVVASGCAI), 98-118 (HVLLFGIAIGVLGFGILALFT), 121-141 (LALLFAAIGYVVYVGIYSLYM), 145-165 (SVYGTLVGSFSGAVPPVVGYC), 176-196 (VILLLMFSLWQMPHSYAIAIF), 222-242 (IVLYIAVFALVSTMLPLAGYT), 245-265 (AFMAVTCATSLWWLTMALKGY), and 277-297 (QVFGFSIITITALSVTMALDF).

It belongs to the UbiA prenyltransferase family. Protoheme IX farnesyltransferase subfamily.

It is found in the cell inner membrane. The catalysed reaction is heme b + (2E,6E)-farnesyl diphosphate + H2O = Fe(II)-heme o + diphosphate. Its pathway is porphyrin-containing compound metabolism; heme O biosynthesis; heme O from protoheme: step 1/1. Functionally, converts heme B (protoheme IX) to heme O by substitution of the vinyl group on carbon 2 of heme B porphyrin ring with a hydroxyethyl farnesyl side group. This chain is Protoheme IX farnesyltransferase 2, found in Shewanella sp. (strain MR-7).